The sequence spans 131 residues: Biogenesis of lysosome-related organelles complex 1 subunit CNL1 (131 aa).

The interval 1-29 is disordered; that stretch reads MSAPDSNSGHAHDSAQNEGAAEGTRDPFG. A coiled-coil region spans residues 73-101; the sequence is DAIDINIEEMRRILQKCEELETHFDMLDQ.

It belongs to the BLOC1S4 family. As to quaternary structure, component of the biogenesis of lysosome-related organelles complex-1 (BLOC-1).

Its subcellular location is the cytoplasm. Its function is as follows. Component of the biogenesis of lysosome-related organelles complex-1 (BLOC-1), a complex that is involved in endosomal cargo sorting. This Lachancea thermotolerans (strain ATCC 56472 / CBS 6340 / NRRL Y-8284) (Yeast) protein is Biogenesis of lysosome-related organelles complex 1 subunit CNL1 (CLN1).